An 876-amino-acid polypeptide reads, in one-letter code: DNA gyrase subunit A (876 aa).

The region spanning 34-532 is the Topo IIA-type catalytic domain; that stretch reads LPDVRDGLKP…NSVDINIEDL (499 aa). Tyrosine 122 acts as the O-(5'-phospho-DNA)-tyrosine intermediate in catalysis. Positions 559–565 match the GyrA-box motif; it reads QRRGGKG. The tract at residues 844 to 876 is disordered; that stretch reads DEELDAIDGSAAEGDEDIAPEADTDDDIAEDEE. The span at 856–876 shows a compositional bias: acidic residues; the sequence is EGDEDIAPEADTDDDIAEDEE.

This sequence belongs to the type II topoisomerase GyrA/ParC subunit family. As to quaternary structure, heterotetramer, composed of two GyrA and two GyrB chains. In the heterotetramer, GyrA contains the active site tyrosine that forms a transient covalent intermediate with DNA, while GyrB binds cofactors and catalyzes ATP hydrolysis.

The protein localises to the cytoplasm. It catalyses the reaction ATP-dependent breakage, passage and rejoining of double-stranded DNA.. Its function is as follows. A type II topoisomerase that negatively supercoils closed circular double-stranded (ds) DNA in an ATP-dependent manner to modulate DNA topology and maintain chromosomes in an underwound state. Negative supercoiling favors strand separation, and DNA replication, transcription, recombination and repair, all of which involve strand separation. Also able to catalyze the interconversion of other topological isomers of dsDNA rings, including catenanes and knotted rings. Type II topoisomerases break and join 2 DNA strands simultaneously in an ATP-dependent manner. The polypeptide is DNA gyrase subunit A (Klebsiella oxytoca).